The sequence spans 270 residues: 4-hydroxy-tetrahydrodipicolinate reductase (270 aa).

NAD(+)-binding positions include 11-16 and glutamate 37; that span reads GASGRM. Arginine 38 is an NADP(+) binding site. NAD(+) contacts are provided by residues 101–103 and 125–128; these read GTT and APNM. The Proton donor/acceptor role is filled by histidine 158. Histidine 159 contacts (S)-2,3,4,5-tetrahydrodipicolinate. The Proton donor role is filled by lysine 162. 168-169 serves as a coordination point for (S)-2,3,4,5-tetrahydrodipicolinate; the sequence is GT.

This sequence belongs to the DapB family.

Its subcellular location is the cytoplasm. It catalyses the reaction (S)-2,3,4,5-tetrahydrodipicolinate + NAD(+) + H2O = (2S,4S)-4-hydroxy-2,3,4,5-tetrahydrodipicolinate + NADH + H(+). The catalysed reaction is (S)-2,3,4,5-tetrahydrodipicolinate + NADP(+) + H2O = (2S,4S)-4-hydroxy-2,3,4,5-tetrahydrodipicolinate + NADPH + H(+). It participates in amino-acid biosynthesis; L-lysine biosynthesis via DAP pathway; (S)-tetrahydrodipicolinate from L-aspartate: step 4/4. Catalyzes the conversion of 4-hydroxy-tetrahydrodipicolinate (HTPA) to tetrahydrodipicolinate. This Shewanella frigidimarina (strain NCIMB 400) protein is 4-hydroxy-tetrahydrodipicolinate reductase.